The following is a 72-amino-acid chain: Translation initiation factor IF-1 (72 aa).

The S1-like domain maps to Met1–Arg72.

It belongs to the IF-1 family. In terms of assembly, component of the 30S ribosomal translation pre-initiation complex which assembles on the 30S ribosome in the order IF-2 and IF-3, IF-1 and N-formylmethionyl-tRNA(fMet); mRNA recruitment can occur at any time during PIC assembly.

It localises to the cytoplasm. Its function is as follows. One of the essential components for the initiation of protein synthesis. Stabilizes the binding of IF-2 and IF-3 on the 30S subunit to which N-formylmethionyl-tRNA(fMet) subsequently binds. Helps modulate mRNA selection, yielding the 30S pre-initiation complex (PIC). Upon addition of the 50S ribosomal subunit IF-1, IF-2 and IF-3 are released leaving the mature 70S translation initiation complex. In Treponema denticola (strain ATCC 35405 / DSM 14222 / CIP 103919 / JCM 8153 / KCTC 15104), this protein is Translation initiation factor IF-1.